Here is a 322-residue protein sequence, read N- to C-terminus: Phthalate dioxygenase reductase (322 aa).

The FAD-binding FR-type domain occupies 7–109 (DGFLRLKIAS…SLPRNEFPLD (103 aa)). FMN contacts are provided by residues 56–57 (RT), 73–75 (AVK), 81–84 (RGGS), Thr-125, and Phe-226. Residues 239–322 (FTVRLSRSGT…AKSAELVLDL (84 aa)) form the 2Fe-2S ferredoxin-type domain. Cys-273 is a [2Fe-2S] cluster binding site. Ser-275 contacts FMN. 3 residues coordinate [2Fe-2S] cluster: Cys-278, Cys-281, and Cys-309.

It belongs to the PDR/VanB family. Monomer. FMN is required as a cofactor.

Functionally, component of the electron transfer chain involved in pyridine nucleotide-dependent dihydroxylation of phthalate. Utilizes FMN to mediate electron transfer from the two-electron donor, NADH, to the one-electron acceptor, (2Fe-2S). The sequence is that of Phthalate dioxygenase reductase (ophA1) from Burkholderia cepacia (Pseudomonas cepacia).